A 92-amino-acid chain; its full sequence is Small ribosomal subunit protein uS19 (92 aa).

This sequence belongs to the universal ribosomal protein uS19 family.

Protein S19 forms a complex with S13 that binds strongly to the 16S ribosomal RNA. This Rickettsia africae (strain ESF-5) protein is Small ribosomal subunit protein uS19.